A 428-amino-acid polypeptide reads, in one-letter code: Tyrosine--tRNA ligase (428 aa).

Position 41 (Tyr41) interacts with L-tyrosine. The short motif at 46 to 55 (PTADSLHLGH) is the 'HIGH' region element. Positions 179 and 183 each coordinate L-tyrosine. Positions 239–243 (KFGKT) match the 'KMSKS' region motif. An ATP-binding site is contributed by Lys242. In terms of domain architecture, S4 RNA-binding spans 361–418 (ADLLQALVDSELQPSRGQARKTVASNAVTINGEKQADPEYVFSDSDRLFGRYTLLRRG).

This sequence belongs to the class-I aminoacyl-tRNA synthetase family. TyrS type 1 subfamily. Homodimer.

Its subcellular location is the cytoplasm. It carries out the reaction tRNA(Tyr) + L-tyrosine + ATP = L-tyrosyl-tRNA(Tyr) + AMP + diphosphate + H(+). Its function is as follows. Catalyzes the attachment of tyrosine to tRNA(Tyr) in a two-step reaction: tyrosine is first activated by ATP to form Tyr-AMP and then transferred to the acceptor end of tRNA(Tyr). This Klebsiella pneumoniae subsp. pneumoniae (strain ATCC 700721 / MGH 78578) protein is Tyrosine--tRNA ligase.